The primary structure comprises 158 residues: Small ribosomal subunit protein uS9 (158 aa).

Belongs to the universal ribosomal protein uS9 family.

The polypeptide is Small ribosomal subunit protein uS9 (Rhodopseudomonas palustris (strain HaA2)).